Consider the following 382-residue polypeptide: Pregnancy-associated glycoprotein 1 (382 aa).

An N-terminal signal peptide occupies residues 1–15 (MKWLVLLGLVAFSEC). Positions 16-53 (IVKIPLRRVKTMRNTLSGKKMLNSFLKEHAYRLSQISF) are cleaved as a propeptide — activation peptide. 2 N-linked (GlcNAc...) asparagine glycosylation sites follow: asparagine 57 and asparagine 74. The Peptidase A1 domain maps to 71–379 (YVGNITIGTP…DRGNDRIGLA (309 aa)). Cysteine 102 and cysteine 110 are joined by a disulfide. N-linked (GlcNAc...) asparagine glycosylation occurs at asparagine 128. Intrachain disulfides connect cysteine 263–cysteine 267 and cysteine 305–cysteine 339.

It belongs to the peptidase A1 family. Trophoblast and placental tissue. Produced specifically in the invasive binucleate cells of the placenta.

Its subcellular location is the secreted. The protein localises to the extracellular space. Has no proteolytic activity. The protein is Pregnancy-associated glycoprotein 1 of Ovis aries (Sheep).